Reading from the N-terminus, the 20-residue chain is Large ribosomal subunit protein uL10 (20 aa).

The protein belongs to the universal ribosomal protein uL10 family. As to quaternary structure, part of the ribosomal stalk of the 50S ribosomal subunit. The N-terminus interacts with L11 and the large rRNA to form the base of the stalk. The C-terminus forms an elongated spine to which L12 dimers bind in a sequential fashion forming a multimeric L10(L12)X complex.

Functionally, forms part of the ribosomal stalk, playing a central role in the interaction of the ribosome with GTP-bound translation factors. The sequence is that of Large ribosomal subunit protein uL10 (rplJ) from Citrobacter freundii.